A 157-amino-acid chain; its full sequence is ATP synthase subunit b (157 aa).

Residues 11–31 (LIMFAMFTWFCMKFIWPPIVM) traverse the membrane as a helical segment.

Belongs to the ATPase B chain family. In terms of assembly, F-type ATPases have 2 components, F(1) - the catalytic core - and F(0) - the membrane proton channel. F(1) has five subunits: alpha(3), beta(3), gamma(1), delta(1), epsilon(1). F(0) has three main subunits: a(1), b(2) and c(10-14). The alpha and beta chains form an alternating ring which encloses part of the gamma chain. F(1) is attached to F(0) by a central stalk formed by the gamma and epsilon chains, while a peripheral stalk is formed by the delta and b chains.

It localises to the cell inner membrane. Functionally, f(1)F(0) ATP synthase produces ATP from ADP in the presence of a proton or sodium gradient. F-type ATPases consist of two structural domains, F(1) containing the extramembraneous catalytic core and F(0) containing the membrane proton channel, linked together by a central stalk and a peripheral stalk. During catalysis, ATP synthesis in the catalytic domain of F(1) is coupled via a rotary mechanism of the central stalk subunits to proton translocation. Component of the F(0) channel, it forms part of the peripheral stalk, linking F(1) to F(0). The protein is ATP synthase subunit b of Vesicomyosocius okutanii subsp. Calyptogena okutanii (strain HA).